The primary structure comprises 719 residues: Plasmin and fibronectin-binding protein A (719 aa).

Residues 1-45 form the signal peptide; the sequence is MLKIVKKLEVLMKYFVPNEVFSIRKLKVGTCSVLLAISILGSQGI. Disordered stretches follow at residues 56 to 76 and 109 to 128; these read PMATKESSNAITNDLDNSPTV and IRSNSQLDNRTVESTVTSTN. PbH1 repeat units lie at residues 287 to 310, 362 to 384, 397 to 419, 497 to 523, and 525 to 546; these read SNNVTIKNVTFKDSYQGHAIQIAG, SENVTIQNSYFGKSDKSGELVTA, PSNIKILNNHFDNMMYAGVRFTG, VSDITVTKNVINNNSKETEQPNIELLR, and SDNLVVSENSIFGGKEGIVIED. Residues 601–658 adopt a coiled-coil conformation; the sequence is NNLSDKNEKEKNKEEKQSNSNNVIDSNQKNGEFNSSKDNRQMNDKIDNKQDNKTEEVN. Over residues 606-617 the composition is skewed to basic and acidic residues; sequence KNEKEKNKEEKQ. Residues 606–655 form a disordered region; it reads KNEKEKNKEEKQSNSNNVIDSNQKNGEFNSSKDNRQMNDKIDNKQDNKTE. The span at 623-634 shows a compositional bias: polar residues; it reads VIDSNQKNGEFN. The span at 635 to 655 shows a compositional bias: basic and acidic residues; that stretch reads SSKDNRQMNDKIDNKQDNKTE. The short motif at 685-689 is the LPXTG sorting signal element; it reads LPKTG. Threonine 688 is subject to Pentaglycyl murein peptidoglycan amidated threonine. A propeptide spans 689 to 719 (removed by sortase); the sequence is GSNKIMELFLTVTGIGLLLTLKGLKYYGKDK.

It is found in the secreted. It localises to the cell wall. Acts as a fibronectin-dependent adhesin and invasin. Binds host (in this case human) fibronectin, plasmin, plasminogen, and human serum albumin. Where the bacteria adhere to human cells there is major recruitment of microvilli which seem to fuse to cover the streptococcal chains. Antibodies to this protein reduce bacterial growth in human blood. This is Plasmin and fibronectin-binding protein A (pfbA) from Streptococcus pneumoniae (strain ATCC BAA-255 / R6).